The following is a 269-amino-acid chain: Malonyl-[acyl-carrier protein] O-methyltransferase (269 aa).

This sequence belongs to the methyltransferase superfamily.

The catalysed reaction is malonyl-[ACP] + S-adenosyl-L-methionine = malonyl-[ACP] methyl ester + S-adenosyl-L-homocysteine. It participates in cofactor biosynthesis; biotin biosynthesis. In terms of biological role, converts the free carboxyl group of a malonyl-thioester to its methyl ester by transfer of a methyl group from S-adenosyl-L-methionine (SAM). It allows to synthesize pimeloyl-ACP via the fatty acid synthetic pathway. This chain is Malonyl-[acyl-carrier protein] O-methyltransferase, found in Bacillus anthracis.